Here is an 845-residue protein sequence, read N- to C-terminus: Complement component C7 (845 aa).

Residues 1 to 22 (MQVTSLLILVCFIAAFQVFSRA) form the signal peptide. A TSP type-1 1 domain is found at 27–80 (NCKWDSYGPWSECNGCTKTQTRRRSVAVYGQYGGYPCEGSAFETQSCKPERGCP). 6 cysteine pairs are disulfide-bonded: C28–C63, C39–C73, C42–C79, C85–C96, C91–C109, and C103–C119. Residues 84–120 (GCGDRFRCFSGQCISKSLVCNGDPDCEEDGADEDKCE) form the LDL-receptor class A domain. Residues 122–456 (VANPSCNIDK…EYFDEFDPCH (335 aa)) form the MACPF domain. N-linked (GlcNAc...) asparagine glycosylation occurs at N124. The cysteines at positions 127 and 164 are disulfide-linked. An N-linked (GlcNAc...) asparagine glycan is attached at N201. 21 disulfides stabilise this stretch: C336–C353, C433–C560, C455–C505, C457–C473, C460–C475, C477–C486, C512–C545, C523–C535, C571–C613, C599–C626, C631–C673, C659–C688, C703–C714, C716–C751, C722–C744, C729–C764, C774–C783, C777–C790, C792–C826, C798–C819, and C806–C839. An EGF-like domain is found at 457 to 487 (CRPCQNGGLAIVVETQCQCLCKPYTFGSACE). Positions 500–549 (DGGWNCWSSWSPCVQGKRTRSRECNNPPPRDDGKSCLGETTESKQCEDQD) constitute a TSP type-1 2 domain. CCP regions lie at residues 545–615 (CEDQ…RCGE) and 616–693 (DLQW…QKAT). 2 Sushi domains span residues 569-628 (EFCL…HCQK) and 629-690 (LACV…KCVQ). 2 factor I module (FIM) regions span residues 695-771 (TPPP…SPAE) and 772-844 (KVCG…EEAA). The N-linked (GlcNAc...) asparagine glycan is linked to N755.

It belongs to the complement C6/C7/C8/C9 family. As to quaternary structure, monomer or dimer; as a C5b-7 complex it can also form multimeric rosettes. Component of the membrane attack complex (MAC), composed of complement C5b, C6, C7, C8A, C8B, C8G and multiple copies of the pore-forming subunit C9. In terms of processing, C-, N- and O-glycosylated. O-glycosylated with core 1 or possibly core 8 glycans.

Its subcellular location is the secreted. The protein resides in the target cell membrane. Its activity is regulated as follows. Membrane attack complex (MAC) assembly is inhibited by CD59, thereby protecting self-cells from damage during complement activation. MAC assembly is also inhibited by clusterin (CLU) chaperones that inhibit polymerization of C9. Its function is as follows. Component of the membrane attack complex (MAC), a multiprotein complex activated by the complement cascade, which inserts into a target cell membrane and forms a pore, leading to target cell membrane rupture and cell lysis. The MAC is initiated by proteolytic cleavage of C5 into complement C5b in response to the classical, alternative, lectin and GZMK complement pathways. The complement pathways consist in a cascade of proteins that leads to phagocytosis and breakdown of pathogens and signaling that strengthens the adaptive immune system. C7 serves as a membrane anchor. During MAC assembly, associates with C5b and C6 to form the C5b-7 complex, a key lipophilic precursor of the MAC complex, which associates with the outer leaflet and reduces the energy for membrane bending. In Mus musculus (Mouse), this protein is Complement component C7.